Here is a 153-residue protein sequence, read N- to C-terminus: SsrA-binding protein (153 aa).

It belongs to the SmpB family.

It is found in the cytoplasm. Functionally, required for rescue of stalled ribosomes mediated by trans-translation. Binds to transfer-messenger RNA (tmRNA), required for stable association of tmRNA with ribosomes. tmRNA and SmpB together mimic tRNA shape, replacing the anticodon stem-loop with SmpB. tmRNA is encoded by the ssrA gene; the 2 termini fold to resemble tRNA(Ala) and it encodes a 'tag peptide', a short internal open reading frame. During trans-translation Ala-aminoacylated tmRNA acts like a tRNA, entering the A-site of stalled ribosomes, displacing the stalled mRNA. The ribosome then switches to translate the ORF on the tmRNA; the nascent peptide is terminated with the 'tag peptide' encoded by the tmRNA and targeted for degradation. The ribosome is freed to recommence translation, which seems to be the essential function of trans-translation. This is SsrA-binding protein from Pelotomaculum thermopropionicum (strain DSM 13744 / JCM 10971 / SI).